A 247-amino-acid polypeptide reads, in one-letter code: Coproheme decarboxylase (247 aa).

Fe-coproporphyrin III is bound by residues R129, 143 to 147, H170, Q183, and S221; that span reads YPMDK. Residue Y143 is part of the active site.

It belongs to the ChdC family. Type 1 subfamily. Fe-coproporphyrin III is required as a cofactor.

It catalyses the reaction Fe-coproporphyrin III + 2 H2O2 + 2 H(+) = heme b + 2 CO2 + 4 H2O. The catalysed reaction is Fe-coproporphyrin III + H2O2 + H(+) = harderoheme III + CO2 + 2 H2O. The enzyme catalyses harderoheme III + H2O2 + H(+) = heme b + CO2 + 2 H2O. The protein operates within porphyrin-containing compound metabolism; protoheme biosynthesis. Functionally, involved in coproporphyrin-dependent heme b biosynthesis. Catalyzes the decarboxylation of Fe-coproporphyrin III (coproheme) to heme b (protoheme IX), the last step of the pathway. The reaction occurs in a stepwise manner with a three-propionate intermediate. This Bacillus cereus (strain B4264) protein is Coproheme decarboxylase.